We begin with the raw amino-acid sequence, 886 residues long: Conserved oligomeric Golgi complex subunit 1 (886 aa).

The segment covering 834-846 (SAERKSPIQEPVE) has biased composition (basic and acidic residues). A disordered region spans residues 834–886 (SAERKSPIQEPVEKTATTTPTRKSGGNGARKGDSSKSKSSAASFFGMSQEWFR). Phosphoserine is present on serine 839. Residues 848–857 (TATTTPTRKS) are compositionally biased toward polar residues.

Belongs to the COG1 family. In terms of assembly, component of the conserved oligomeric Golgi complex which is composed of eight different subunits and is required for normal Golgi morphology and localization.

Its subcellular location is the golgi apparatus membrane. Its function is as follows. Required for normal Golgi function. The sequence is that of Conserved oligomeric Golgi complex subunit 1 from Drosophila melanogaster (Fruit fly).